The following is a 763-amino-acid chain: MEDNSEQASVSSQASMRPLVSDNGDREAGAGVEVNIANDNDTSVGVDGENGNEDDDPILSKYHNACQRGDLEVVREMIHGGQVNVSSDADREGVTGLHWAAINNRLNVVDFLVREGANVESKAGALEATPLHWAARYGFVYVVDYLLQHGASATTTDKQGFNLLHLSVNSSNIMLVVYVLFFVVSKGIIDIDYVDPKGRTALLWAAYQGDSLTVAALIKFNASVKIADEGGFTPLHWGTVKGQPHVLKYLIQDGADFFQKTNDNKDCFVIAEEMSNTHSFQEALRHNNFDKNGYPINKLVKRDDHAKIITFLIPLLVLGFAFFGFSHLHILFALPVIILLLLASNKFIKSFLLPSYETKGTNSASLLKSPLIAGILFGSIFWLAFVWILRILPYTFTKRPLGNLTFCAILCFVCYSLFLLAFSDPGHIGSENDHEKIRETISNLLKEGKFDTRSFCLETWVRKPLRSKYSYLNDALILRFDHYCPWIYNDVGLKNHKLFIFFILALELGIFSFVKVCLKYFDELDMDGDCFILGDDDLCSGLIGDRFTFLIMTWACIQAVWIFSLVIVQLFQITKGLTNSELNALIREGRRVDIDSQTHNEFFNTVPEGFINNKDTEEEAAPPVRNNTNERISTTFSGNLPKPRTCMGMICAVTGLHQCVAIIKDTFGIARHGSSRSTNTRSLLSSISTDYGWRRNWCDFWLLSDTNTPLWKRIFFSPPSTKALLNGKEADYATLYEVPNKNHGSVSQLQELQDPLSEIDDMV.

Polar residues predominate over residues 1-15 (MEDNSEQASVSSQAS). The segment at 1–59 (MEDNSEQASVSSQASMRPLVSDNGDREAGAGVEVNIANDNDTSVGVDGENGNEDDDPIL) is disordered. The Cytoplasmic portion of the chain corresponds to 1 to 307 (MEDNSEQASV…KLVKRDDHAK (307 aa)). 7 ANK repeats span residues 57–87 (PILSKYHNACQRGDLEVVREMIHGGQVNVSS), 92–121 (EGVTGLHWAAINNRLNVVDFLVREGANVES), 126–155 (LEATPLHWAARYGFVYVVDYLLQHGASATT), 159–188 (QGFNLLHLSVNSSNIMLVVYVLFFVVSKGI), 197–226 (KGRTALLWAAYQGDSLTVAALIKFNASVKI), 230–259 (GGFTPLHWGTVKGQPHVLKYLIQDGADFFQ), and 292–322 (NGYPINKLVKRDDHAKIITFLIPLLVLGFAF). The helical transmembrane segment at 308–325 (IITFLIPLLVLGFAFFGF) threads the bilayer. The Lumenal portion of the chain corresponds to 326-330 (SHLHI). Residues 331–348 (LFALPVIILLLLASNKFI) form a helical membrane-spanning segment. Residues 349–368 (KSFLLPSYETKGTNSASLLK) lie on the Cytoplasmic side of the membrane. Residues 369-389 (SPLIAGILFGSIFWLAFVWIL) traverse the membrane as a helical segment. The Lumenal portion of the chain corresponds to 390-401 (RILPYTFTKRPL). Residues 402–422 (GNLTFCAILCFVCYSLFLLAF) form a helical membrane-spanning segment. The Cytoplasmic portion of the chain corresponds to 423–497 (SDPGHIGSEN…YNDVGLKNHK (75 aa)). The 51-residue stretch at 454-504 (SFCLETWVRKPLRSKYSYLNDALILRFDHYCPWIYNDVGLKNHKLFIFFIL) folds into the DHHC domain. Cysteine 484 (S-palmitoyl cysteine intermediate) is an active-site residue. The helical transmembrane segment at 498–518 (LFIFFILALELGIFSFVKVCL) threads the bilayer. Over 519 to 546 (KYFDELDMDGDCFILGDDDLCSGLIGDR) the chain is Lumenal. Residues 547–567 (FTFLIMTWACIQAVWIFSLVI) form a helical membrane-spanning segment. Over 568–763 (VQLFQITKGL…DPLSEIDDMV (196 aa)) the chain is Cytoplasmic.

Belongs to the DHHC palmitoyltransferase family. AKR/ZDHHC17 subfamily.

It is found in the early endosome membrane. Its subcellular location is the golgi apparatus membrane. The catalysed reaction is L-cysteinyl-[protein] + hexadecanoyl-CoA = S-hexadecanoyl-L-cysteinyl-[protein] + CoA. Functionally, palmitoyltransferase specific for casein kinase 1. The chain is Palmitoyltransferase AKR1 (AKR1) from Candida glabrata (strain ATCC 2001 / BCRC 20586 / JCM 3761 / NBRC 0622 / NRRL Y-65 / CBS 138) (Yeast).